Here is a 145-residue protein sequence, read N- to C-terminus: MNKIRKWLDKIPWYTDEIHSILMYLIMGGFTTLINIVTFWLCTYVLNWDYRIANTIAWVASVLFAYFSNKKYVFESYTPTWKERAREVTSFFGFRFLTYLVDILVMILLIEVLSINELWAKIWTNVIVLVLNYVFSKWIIFKVKK.

The next 4 helical transmembrane spans lie at 21 to 41 (ILMYLIMGGFTTLINIVTFWL), 52 to 69 (IANTIAWVASVLFAYFSN), 96 to 116 (FLTYLVDILVMILLIEVLSIN), and 121 to 141 (KIWTNVIVLVLNYVFSKWIIF).

It belongs to the GtrA family.

It is found in the cell membrane. Involved in the decoration of cell wall teichoic acid with galactose and glucose. The protein is Cell wall teichoic acid glycosylation protein GtcA (gtcA) of Listeria monocytogenes serovar 1/2a (strain ATCC BAA-679 / EGD-e).